Here is a 176-residue protein sequence, read N- to C-terminus: Lipoprotein signal peptidase (176 aa).

Helical transmembrane passes span 11 to 31, 38 to 58, 76 to 96, and 101 to 121; these read AFVA…LDQL, ATMQ…VLVF, WFFT…MHQH, and LLPA…VDRL. Residues D128 and D146 contribute to the active site. A helical transmembrane segment spans residues 139-159; sequence WPAFNLADSAITLGVGLMLWA.

This sequence belongs to the peptidase A8 family.

It is found in the cell inner membrane. It carries out the reaction Release of signal peptides from bacterial membrane prolipoproteins. Hydrolyzes -Xaa-Yaa-Zaa-|-(S,diacylglyceryl)Cys-, in which Xaa is hydrophobic (preferably Leu), and Yaa (Ala or Ser) and Zaa (Gly or Ala) have small, neutral side chains.. It functions in the pathway protein modification; lipoprotein biosynthesis (signal peptide cleavage). In terms of biological role, this protein specifically catalyzes the removal of signal peptides from prolipoproteins. This chain is Lipoprotein signal peptidase, found in Azoarcus sp. (strain BH72).